The sequence spans 970 residues: Sodium/calcium exchanger 1 (970 aa).

Positions 1–32 are cleaved as a signal peptide; it reads MLQLRLLPTFSMGCHLLAVVALLFSHVDLISA. At 33 to 71 the chain is on the extracellular side; that stretch reads ETEMEGEGNETGECTGSYYCKKGVILPIWEPQDPSFGDK. Asn41 carries N-linked (GlcNAc...) asparagine glycosylation. The chain crosses the membrane as a helical span at residues 72–92; sequence IARATVYFVAMVYMFLGVSII. The Cytoplasmic portion of the chain corresponds to 93-133; sequence ADRFMSSIEVITSQEKEITIKKPNGETTKTTVRIWNETVSN. A helical transmembrane segment spans residues 134–154; it reads LTLMALGSSAPEILLSVIEVC. One copy of the Alpha-1 repeat lies at 138-178; that stretch reads ALGSSAPEILLSVIEVCGHNFTAGDLGPSTIVGSAAFNMFI. At 155-167 the chain is on the extracellular side; that stretch reads GHNFTAGDLGPST. Residue Asn157 is glycosylated (N-linked (GlcNAc...) asparagine). Residues 168–188 traverse the membrane as a helical segment; sequence IVGSAAFNMFIIIALCVYVVP. Topologically, residues 189-201 are cytoplasmic; that stretch reads DGETRKIKHLRVF. A helical transmembrane segment spans residues 202–222; the sequence is FVTAAWSIFAYTWLYIILSVI. Residues 223–228 are Extracellular-facing; the sequence is SPGVVE. Residues 229-249 traverse the membrane as a helical segment; the sequence is VWEGLLTFFFFPICVVFAWVA. Residues 250–797 lie on the Cytoplasmic side of the membrane; sequence DRRLLFYKYV…FVPPTEYWNG (548 aa). Residues 251–270 are putative calmodulin-binding region; it reads RRLLFYKYVYKRYRAGKQRG. A phosphoserine mark is found at Ser282 and Ser389. 2 consecutive Calx-beta domains span residues 393 to 493 and 524 to 624; these read VNTE…VHLS and ATVT…LEIG. 16 residues coordinate Ca(2+): Glu417, Asp453, Asp478, Asp479, Ile481, Glu483, Glu486, Asp530, Asp531, Asp532, Glu548, Asp584, Asp610, Glu611, Glu612, and Glu715. A helical transmembrane segment spans residues 798 to 818; that stretch reads WACFIVSILMIGILTAFIGDL. The Extracellular segment spans residues 819-821; sequence ASH. The helical transmembrane segment at 822–842 threads the bilayer; the sequence is FGCTIGLKDSVTAVVFVALGT. Residues 839–875 form an Alpha-2 repeat; it reads ALGTSVPDTFASKVAATQDQYADASIGNVTGSNAVNV. The Cytoplasmic segment spans residues 843–871; the sequence is SVPDTFASKVAATQDQYADASIGNVTGSN. A helical transmembrane segment spans residues 872–892; it reads AVNVFLGIGVAWSIAAIYHAA. The Extracellular portion of the chain corresponds to 893–903; it reads NGEQFKVSPGT. Residues 904-924 form a helical membrane-spanning segment; it reads LAFSVTLFTIFAFINVGVLLY. Over 925-941 the chain is Cytoplasmic; that stretch reads RRRPEIGGELGGPRTAK. A helical membrane pass occupies residues 942 to 962; that stretch reads LLTSCLFVLLWLLYIFFSSLE. Residues 963 to 970 lie on the Extracellular side of the membrane; it reads AYCHIKGF.

It belongs to the Ca(2+):cation antiporter (CaCA) (TC 2.A.19) family. SLC8 subfamily. As to expression, cardiac sarcolemma (at protein level).

The protein localises to the cell membrane. The protein resides in the sarcolemma. It carries out the reaction Ca(2+)(in) + 3 Na(+)(out) = Ca(2+)(out) + 3 Na(+)(in). With respect to regulation, activated by micromolar levels of Ca(2+). In the absence of regulatory Ca(2+), channels open rapidly, and then inactivate rapidly. Inactivation is enhanced by Na(+) and is inhibited by micromolar levels of Ca(2+). Mediates the exchange of one Ca(2+) ion against three to four Na(+) ions across the cell membrane, and thereby contributes to the regulation of cytoplasmic Ca(2+) levels and Ca(2+)-dependent cellular processes. Contributes to Ca(2+) transport during excitation-contraction coupling in muscle. In a first phase, voltage-gated channels mediate the rapid increase of cytoplasmic Ca(2+) levels due to release of Ca(2+) stores from the endoplasmic reticulum. SLC8A1 mediates the export of Ca(2+) from the cell during the next phase, so that cytoplasmic Ca(2+) levels rapidly return to baseline. Required for normal embryonic heart development and the onset of heart contractions. The polypeptide is Sodium/calcium exchanger 1 (SLC8A1) (Canis lupus familiaris (Dog)).